Consider the following 94-residue polypeptide: Large ribosomal subunit protein bL25 (94 aa).

It belongs to the bacterial ribosomal protein bL25 family. In terms of assembly, part of the 50S ribosomal subunit; part of the 5S rRNA/L5/L18/L25 subcomplex. Contacts the 5S rRNA. Binds to the 5S rRNA independently of L5 and L18.

In terms of biological role, this is one of the proteins that binds to the 5S RNA in the ribosome where it forms part of the central protuberance. The protein is Large ribosomal subunit protein bL25 of Shigella boydii serotype 4 (strain Sb227).